Consider the following 754-residue polypeptide: 5-methyltetrahydropteroyltriglutamate--homocysteine methyltransferase (754 aa).

5-methyltetrahydropteroyltri-L-glutamate is bound by residues 17 to 20 (RELK) and lysine 117. L-homocysteine-binding positions include 431 to 433 (IGS) and glutamate 484. L-methionine is bound by residues 431–433 (IGS) and glutamate 484. 5-methyltetrahydropteroyltri-L-glutamate is bound by residues 515–516 (RC) and tryptophan 561. Aspartate 599 is a binding site for L-homocysteine. Aspartate 599 serves as a coordination point for L-methionine. Position 605 (glutamate 605) interacts with 5-methyltetrahydropteroyltri-L-glutamate. Histidine 641, cysteine 643, and glutamate 665 together coordinate Zn(2+). The active-site Proton donor is histidine 694. Residue cysteine 726 coordinates Zn(2+).

Belongs to the vitamin-B12 independent methionine synthase family. It depends on Zn(2+) as a cofactor.

The enzyme catalyses 5-methyltetrahydropteroyltri-L-glutamate + L-homocysteine = tetrahydropteroyltri-L-glutamate + L-methionine. It participates in amino-acid biosynthesis; L-methionine biosynthesis via de novo pathway; L-methionine from L-homocysteine (MetE route): step 1/1. Functionally, catalyzes the transfer of a methyl group from 5-methyltetrahydrofolate to homocysteine resulting in methionine formation. This is 5-methyltetrahydropteroyltriglutamate--homocysteine methyltransferase from Salmonella agona (strain SL483).